We begin with the raw amino-acid sequence, 256 residues long: Trans-aconitate 2-methyltransferase (256 aa).

It belongs to the methyltransferase superfamily. Tam family.

The protein localises to the cytoplasm. The catalysed reaction is trans-aconitate + S-adenosyl-L-methionine = (E)-3-(methoxycarbonyl)pent-2-enedioate + S-adenosyl-L-homocysteine. Catalyzes the S-adenosylmethionine monomethyl esterification of trans-aconitate. The sequence is that of Trans-aconitate 2-methyltransferase from Agrobacterium fabrum (strain C58 / ATCC 33970) (Agrobacterium tumefaciens (strain C58)).